A 430-amino-acid chain; its full sequence is Enolase (430 aa).

Q167 contributes to the (2R)-2-phosphoglycerate binding site. E209 acts as the Proton donor in catalysis. Positions 246, 289, and 316 each coordinate Mg(2+). K341, R370, S371, and K392 together coordinate (2R)-2-phosphoglycerate. K341 serves as the catalytic Proton acceptor.

This sequence belongs to the enolase family. In terms of assembly, component of the RNA degradosome, a multiprotein complex involved in RNA processing and mRNA degradation. The cofactor is Mg(2+).

Its subcellular location is the cytoplasm. It localises to the secreted. The protein localises to the cell surface. The catalysed reaction is (2R)-2-phosphoglycerate = phosphoenolpyruvate + H2O. It participates in carbohydrate degradation; glycolysis; pyruvate from D-glyceraldehyde 3-phosphate: step 4/5. In terms of biological role, catalyzes the reversible conversion of 2-phosphoglycerate (2-PG) into phosphoenolpyruvate (PEP). It is essential for the degradation of carbohydrates via glycolysis. This Alcanivorax borkumensis (strain ATCC 700651 / DSM 11573 / NCIMB 13689 / SK2) protein is Enolase.